We begin with the raw amino-acid sequence, 445 residues long: Chromosome partition protein MukF (445 aa).

Residues 213–241 (LSETSNTLKELQDTLQAAGDELQTQILDI) form a leucine-zipper region.

The protein belongs to the MukF family. Interacts, and probably forms a ternary complex, with MukE and MukB via its C-terminal region. The complex formation is stimulated by calcium or magnesium. It is required for an interaction between MukE and MukB.

The protein localises to the cytoplasm. It localises to the nucleoid. Involved in chromosome condensation, segregation and cell cycle progression. May participate in facilitating chromosome segregation by condensation DNA from both sides of a centrally located replisome during cell division. Not required for mini-F plasmid partitioning. Probably acts via its interaction with MukB and MukE. Overexpression results in anucleate cells. It has a calcium binding activity. This chain is Chromosome partition protein MukF, found in Vibrio vulnificus (strain CMCP6).